The primary structure comprises 255 residues: tRNA pseudouridine synthase B (255 aa).

Aspartate 58 acts as the Nucleophile in catalysis.

It belongs to the pseudouridine synthase TruB family. Type 1 subfamily.

The enzyme catalyses uridine(55) in tRNA = pseudouridine(55) in tRNA. In terms of biological role, responsible for synthesis of pseudouridine from uracil-55 in the psi GC loop of transfer RNAs. The chain is tRNA pseudouridine synthase B from Chlorobium chlorochromatii (strain CaD3).